A 469-amino-acid chain; its full sequence is 3-isopropylmalate dehydratase large subunit (469 aa).

[4Fe-4S] cluster-binding residues include C349, C410, and C413.

The protein belongs to the aconitase/IPM isomerase family. LeuC type 1 subfamily. As to quaternary structure, heterodimer of LeuC and LeuD. The cofactor is [4Fe-4S] cluster.

It catalyses the reaction (2R,3S)-3-isopropylmalate = (2S)-2-isopropylmalate. The protein operates within amino-acid biosynthesis; L-leucine biosynthesis; L-leucine from 3-methyl-2-oxobutanoate: step 2/4. Its function is as follows. Catalyzes the isomerization between 2-isopropylmalate and 3-isopropylmalate, via the formation of 2-isopropylmaleate. In Neisseria gonorrhoeae (strain NCCP11945), this protein is 3-isopropylmalate dehydratase large subunit.